A 394-amino-acid polypeptide reads, in one-letter code: Protein NDRG1 (394 aa).

An N-acetylserine modification is found at serine 2. A phosphoserine mark is found at serine 2, serine 319, and serine 326. Residues arginine 325 to cysteine 394 form a disordered region. The span at arginine 327–glycine 339 shows a compositional bias: polar residues. The residue at position 328 (threonine 328) is a Phosphothreonine. Position 330 is a phosphoserine; by SGK1 (serine 330). Serine 332 and serine 333 each carry phosphoserine. Threonine 335 bears the Phosphothreonine mark. Phosphoserine is present on serine 336. 3 tandem repeats follow at residues glycine 339 to glutamate 348, glycine 349 to glutamate 358, and glycine 359 to glutamate 368. A 3 X 10 AA tandem repeats of G-[PST]-R-S-R-S-H-T-S-E region spans residues glycine 339–glutamate 368. Threonine 340 carries the post-translational modification Phosphothreonine. The residue at position 342 (serine 342) is a Phosphoserine. A compositionally biased stretch (basic and acidic residues) spans histidine 345–arginine 371. Residue threonine 346 is modified to Phosphothreonine; by SGK1. Residue serine 352 is modified to Phosphoserine. Residue threonine 356 is modified to Phosphothreonine; by SGK1. Serine 362 and serine 364 each carry phosphoserine. The residue at position 366 (threonine 366) is a Phosphothreonine; by SGK1. Polar residues predominate over residues isoleucine 374–glycine 386. Threonine 375 is subject to Phosphothreonine.

The protein belongs to the NDRG family. Interacts with RAB4A (membrane-bound form); the interaction involves NDRG1 in vesicular recycling of CDH1. Interacts with APOA1, APOA2, PRA1 and RTN1. Under stress conditions, phosphorylated in the C-terminal on many serine and threonine residues. Phosphorylated in vitro by PKA. Phosphorylation enhanced by increased intracellular cAMP levels. Homocysteine induces dephosphorylation. Phosphorylation by SGK1 is cell cycle dependent. As to expression, widely expressed, with highest levels in kidney followed by brain, pancreas, small intestine, colon and spleen (at protein level). Also detected in heart and preputial gland, and in much smaller quantities in other tissues. Not detected in duodenum and prostate. Highly expressed in Schwann cells.

Its subcellular location is the cytoplasm. The protein localises to the cytosol. The protein resides in the cytoskeleton. It is found in the microtubule organizing center. It localises to the centrosome. Its subcellular location is the nucleus. The protein localises to the cell membrane. Stress-responsive protein involved in hormone responses, cell growth, and differentiation. Acts as a tumor suppressor in many cell types. Necessary but not sufficient for p53/TP53-mediated caspase activation and apoptosis. Required for vesicular recycling of CDH1 and TF. May also function in lipid trafficking. Protects cells from spindle disruption damage. Functions in p53/TP53-dependent mitotic spindle checkpoint. Regulates microtubule dynamics and maintains euploidy. Has a role in cell trafficking notably of the Schwann cell and is necessary for the maintenance and development of the peripheral nerve myelin sheath. The protein is Protein NDRG1 (Ndrg1) of Mus musculus (Mouse).